The chain runs to 42 residues: Large ribosomal subunit protein bL36 (42 aa).

The protein belongs to the bacterial ribosomal protein bL36 family.

In Ehrlichia ruminantium (strain Gardel), this protein is Large ribosomal subunit protein bL36.